The following is a 536-amino-acid chain: Cytochrome P450 monooxygenase macC (536 aa).

The chain crosses the membrane as a helical span at residues 2–22 (ALLYITTAALALLLLFLRAVF). C448 is a binding site for heme.

Belongs to the cytochrome P450 family. It depends on heme as a cofactor.

The protein resides in the membrane. Its pathway is secondary metabolite biosynthesis; terpenoid biosynthesis. Its function is as follows. Cytochrome P450 monooxygenase; part of the gene cluster that mediates the biosynthesis of macrophorins, isoprenoid epoxycyclohexenones containing cyclized drimane moieties. The first step of the pathway is the synthesis of 6-methylsalicylic acid (6-MSA) by the polyketide synthase macA. 6-MSA is then converted to m-cresol by the decarboxylase macB. The cytochrome P450 monooxygenase macC then catalyzes the oxidation of m-cresol to toluquinol. Epoxidation of toluquinol is then performed by the short chain dehydrogenase macD, with the help of macE, and a further prenylation by macG leads to 7-deacetoxyyanuthone A. The next step is the hydroxylation of C-22 of 7-deacetoxyyanuthone A by the cytochrome P450 monooxygenase macH to yield 22-deacetylyanuthone A. O-Mevalon transferase macI then attaches mevalon to the hydroxyl group of 22-deacetylyanuthone A to produce yanuthone E. The terpene cyclase macJ catalyzes the cyclization of 22-deacetylyanuthone A to macrophorin A. MacJ is also able to catalyze cyclization of yanuthone E and 7-deacetoxyyanuthone A to their corresponding macrophorins. The macJ products can be further modified by macH and macJ, as well as by the FAD-dependent monooxygenase macF, to produce additional macrophorins, including 4'-oxomacrophorin A, 4'-oxomacrophorin D and 4'-oxomacrophorin E. The chain is Cytochrome P450 monooxygenase macC from Penicillium terrestre.